The sequence spans 414 residues: NADH kinase POS5, mitochondrial (414 aa).

Belongs to the NAD kinase family.

It is found in the mitochondrion matrix. It carries out the reaction NADH + ATP = ADP + NADPH + H(+). Its function is as follows. Phosphorylates both NADH and NAD(+), with a twofold preference for NADH. Anti-oxidant factor and key source of the cellular reductant NADPH. The sequence is that of NADH kinase POS5, mitochondrial (POS5) from Saccharomyces cerevisiae (strain ATCC 204508 / S288c) (Baker's yeast).